The primary structure comprises 492 residues: Beclin 1-associated autophagy-related key regulator (492 aa).

The residue at position 29 (serine 29) is a Phosphoserine. Positions 70 to 180 form a coiled coil; the sequence is RDRERFIDKK…KLGDLVEKKT (111 aa). Disordered stretches follow at residues 213-232 and 411-473; these read TSGR…MTSS and GVAG…AGGM. A compositionally biased stretch (polar residues) spans 222-232; the sequence is SSETDSAMTSS. The residue at position 416 (serine 416) is a Phosphoserine. Residues 424–433 show a composition bias toward acidic residues; it reads VSDEETDLGT. Threonine 429 bears the Phosphothreonine mark. The span at 447–473 shows a compositional bias: low complexity; sequence PSQPVEVSQSQSTQASPPIASSSAGGM.

The protein belongs to the ATG14 family. Forms homooligomers; homo-oligomerization is essential for the roles in membrane tethering and enhancement of SNARE-mediated fusion. Component of the PI3K (PI3KC3/PI3K-III/class III phosphatidylinositol 3-kinase) complex I (PI3KC3-C1) in which the core composed of the catalytic subunit PIK3C3, the regulatory subunit PIK3R4 and BECN1 is associated with ATG14. PI3KC3-C1 displays a V-shaped architecture with PIK3R4 serving as a bridge between PIK3C3 and the ATG14:BECN1 subcomplex. PI3KC3-C1 can associate with further regulatory subunits. Interacts with PIK3CB. Interacts (via coiled-coil domain) with BECN2 (via coiled-coil domain); this interaction is tighter than BECN2 self-association. Interacts with the STX17-SNAP29 binary t-SNARE complex. Interacts with NRBF2. Interacts with PIK3C3 and BECN1; this interaction is increased in the absence of TMEM39A. Interacts with STEEP1; the interaction is required for trafficking of STING1 from the endoplasmic reticulum. Interacts with ARMC3 (via ARM domains). Ubiquitinated via 'Lys-6', 'Lys-11' and 'Lys-63'-linked polyubiquitin chains on multiple lysines by MARCHF7, leading to ATG14 aggregation and loss of interaction with STX17.

It is found in the cytoplasm. The protein localises to the endoplasmic reticulum membrane. It localises to the preautophagosomal structure membrane. In terms of biological role, required for both basal and inducible autophagy. Determines the localization of the autophagy-specific PI3-kinase complex. Plays a role in autophagosome formation and MAP1LC3/LC3 conjugation to phosphatidylethanolamine. Promotes BECN1 translocation from the trans-Golgi network to autophagosomes. Enhances PIK3C3 activity in a BECN1-dependent manner. Essential for the autophagy-dependent phosphorylation of BECN1. Stimulates the phosphorylation of BECN1, but suppresses the phosphorylation PIK3C3 by AMPK. Binds to STX17-SNAP29 binary t-SNARE complex on autophagosomes and primes it for VAMP8 interaction to promote autophagosome-endolysosome fusion. Modulates the hepatic lipid metabolism. This Rattus norvegicus (Rat) protein is Beclin 1-associated autophagy-related key regulator.